Reading from the N-terminus, the 289-residue chain is Thymidylate synthase (289 aa).

Residues Arg26 and 151-152 contribute to the dUMP site; that span reads RR. Residue Cys171 is the Nucleophile of the active site. DUMP is bound by residues 191 to 194, Asn202, and 232 to 234; these read RSGD and HVY. (6R)-5,10-methylene-5,6,7,8-tetrahydrofolate is bound at residue Asp194. Residue Ala288 participates in (6R)-5,10-methylene-5,6,7,8-tetrahydrofolate binding.

This sequence belongs to the thymidylate synthase family. As to quaternary structure, homodimer.

The enzyme catalyses dUMP + (6R)-5,10-methylene-5,6,7,8-tetrahydrofolate = 7,8-dihydrofolate + dTMP. It participates in pyrimidine metabolism; dTTP biosynthesis. This Equus caballus (Horse) protein is Thymidylate synthase.